A 181-amino-acid polypeptide reads, in one-letter code: Oleosin (181 aa).

The interval 1 to 28 (TTTTYDRHFTTTQPHYRQDDRSRYDQQT) is disordered. The tract at residues 1–38 (TTTTYDRHFTTTQPHYRQDDRSRYDQQTHSQSTSRTLA) is polar. Residues 16 to 26 (YRQDDRSRYDQ) are compositionally biased toward basic and acidic residues. Helical transmembrane passes span 38–58 (AIIALLPVGGILLGLAALTFI), 69–89 (PLFVIFSPIIVPAVLTIGLAV), and 90–110 (TGFLASGTFGLTGLSSLSYLF). The segment at 39-110 (IIALLPVGGI…TGLSSLSYLF (72 aa)) is hydrophobic. The segment at 155–181 (EMGDQGQVGVHAQVGGGKEGRKSGDRT) is disordered. Positions 158 to 167 (DQGQVGVHAQ) are enriched in low complexity. Basic and acidic residues predominate over residues 172-181 (KEGRKSGDRT).

It belongs to the oleosin family.

The protein resides in the lipid droplet. The protein localises to the membrane. Functionally, may have a structural role to stabilize the lipid body during desiccation of the seed by preventing coalescence of the oil. Probably interacts with both lipid and phospholipid moieties of lipid bodies. May also provide recognition signals for specific lipase anchorage in lipolysis during seedling growth. The chain is Oleosin from Helianthus annuus (Common sunflower).